Consider the following 214-residue polypeptide: Pyridoxine/pyridoxamine 5'-phosphate oxidase (214 aa).

Substrate contacts are provided by residues 9-12 (RKDY) and Lys-67. FMN contacts are provided by residues 62-67 (RMVLLK), 77-78 (FT), Arg-83, Lys-84, and Gln-106. Residues Tyr-124, Arg-128, and Ser-132 each contribute to the substrate site. Residues 141–142 (QS) and Trp-186 contribute to the FMN site. 192-194 (RLH) contributes to the substrate binding site. Arg-196 is a binding site for FMN.

This sequence belongs to the pyridoxamine 5'-phosphate oxidase family. Homodimer. The cofactor is FMN.

It catalyses the reaction pyridoxamine 5'-phosphate + O2 + H2O = pyridoxal 5'-phosphate + H2O2 + NH4(+). The catalysed reaction is pyridoxine 5'-phosphate + O2 = pyridoxal 5'-phosphate + H2O2. The protein operates within cofactor metabolism; pyridoxal 5'-phosphate salvage; pyridoxal 5'-phosphate from pyridoxamine 5'-phosphate: step 1/1. It functions in the pathway cofactor metabolism; pyridoxal 5'-phosphate salvage; pyridoxal 5'-phosphate from pyridoxine 5'-phosphate: step 1/1. Its function is as follows. Catalyzes the oxidation of either pyridoxine 5'-phosphate (PNP) or pyridoxamine 5'-phosphate (PMP) into pyridoxal 5'-phosphate (PLP). The chain is Pyridoxine/pyridoxamine 5'-phosphate oxidase from Nostoc sp. (strain PCC 7120 / SAG 25.82 / UTEX 2576).